The primary structure comprises 158 residues: Flagellar assembly factor FliW (158 aa).

This sequence belongs to the FliW family. Interacts with translational regulator CsrA and flagellin(s).

The protein resides in the cytoplasm. In terms of biological role, acts as an anti-CsrA protein, binds CsrA and prevents it from repressing translation of its target genes, one of which is flagellin. Binds to flagellin and participates in the assembly of the flagellum. The polypeptide is Flagellar assembly factor FliW (Moorella thermoacetica (strain ATCC 39073 / JCM 9320)).